The primary structure comprises 257 residues: RING1 and YY1-binding protein B (257 aa).

Disordered regions lie at residues 1–24 and 45–257; these read MGDKKSPTRPKRQAKPTADNGFWD and RKGT…DESF. Residues 19 to 48 form a RanBP2-type zinc finger; sequence DNGFWDCSVCTFRNSAEAFKCSICDVRKGT. Over residues 74-129 the composition is skewed to basic and acidic residues; the sequence is PKKEKKEKPERPEKDRAEEERPDINPPDEHPVEQRDKDKSEKEQPEKEKKDREKEI. Residues 149 to 168 show a composition bias toward polar residues; that stretch reads HQSPPSERNSIQSGKSTTKT. Over residues 169-178 the composition is skewed to basic residues; it reads KNSHNSRPKL. Over residues 209-233 the composition is skewed to low complexity; it reads TSSTSSSTVTSSASSEQQHQSSGSE.

The protein resides in the nucleus. Its subcellular location is the cytoplasm. Its function is as follows. May be implicated in the regulation of the transcription as a repressor of the transcriptional activity of E4TF1. In Danio rerio (Zebrafish), this protein is RING1 and YY1-binding protein B (rybpb).